The chain runs to 708 residues: Protein SUPPRESSOR OF MAX2 1A (708 aa).

The interval glutamine 248–threonine 283 is disordered. The EAR motif lies at phenylalanine 537–glutamate 541.

It belongs to the ClpA/ClpB family.

Functionally, probable component of a transcriptional corepressor complex that acts downstream of MAX2 to negatively regulate karrikins/strigolactone responses. Involved in the (-)-germacrene D signaling pathway influencing plant fitness and occurring in the stigma in a KAI2IA-dependent manner. This Petunia hybrida (Petunia) protein is Protein SUPPRESSOR OF MAX2 1A.